Consider the following 463-residue polypeptide: Siroheme synthase (463 aa).

The precorrin-2 dehydrogenase /sirohydrochlorin ferrochelatase stretch occupies residues 1–203; the sequence is MDYLPLFHKL…GQGAEAERLL (203 aa). NAD(+)-binding positions include 22–23 and 43–44; these read EI and PE. The residue at position 128 (S128) is a Phosphoserine. A uroporphyrinogen-III C-methyltransferase region spans residues 216–463; it reads GEVYLVGAGP…LAWFEGAQNS (248 aa). P225 serves as a coordination point for S-adenosyl-L-methionine. D248 acts as the Proton acceptor in catalysis. The active-site Proton donor is K270. S-adenosyl-L-methionine contacts are provided by residues 301–303, I306, 331–332, M383, and G412; these read GGD and TA.

The protein in the N-terminal section; belongs to the precorrin-2 dehydrogenase / sirohydrochlorin ferrochelatase family. It in the C-terminal section; belongs to the precorrin methyltransferase family.

The enzyme catalyses uroporphyrinogen III + 2 S-adenosyl-L-methionine = precorrin-2 + 2 S-adenosyl-L-homocysteine + H(+). It catalyses the reaction precorrin-2 + NAD(+) = sirohydrochlorin + NADH + 2 H(+). It carries out the reaction siroheme + 2 H(+) = sirohydrochlorin + Fe(2+). Its pathway is cofactor biosynthesis; adenosylcobalamin biosynthesis; precorrin-2 from uroporphyrinogen III: step 1/1. It participates in cofactor biosynthesis; adenosylcobalamin biosynthesis; sirohydrochlorin from precorrin-2: step 1/1. It functions in the pathway porphyrin-containing compound metabolism; siroheme biosynthesis; precorrin-2 from uroporphyrinogen III: step 1/1. The protein operates within porphyrin-containing compound metabolism; siroheme biosynthesis; siroheme from sirohydrochlorin: step 1/1. Its pathway is porphyrin-containing compound metabolism; siroheme biosynthesis; sirohydrochlorin from precorrin-2: step 1/1. In terms of biological role, multifunctional enzyme that catalyzes the SAM-dependent methylations of uroporphyrinogen III at position C-2 and C-7 to form precorrin-2 via precorrin-1. Then it catalyzes the NAD-dependent ring dehydrogenation of precorrin-2 to yield sirohydrochlorin. Finally, it catalyzes the ferrochelation of sirohydrochlorin to yield siroheme. The sequence is that of Siroheme synthase from Pseudomonas entomophila (strain L48).